We begin with the raw amino-acid sequence, 225 residues long: Protein-L-isoaspartate O-methyltransferase (225 aa).

The active site involves Ser75.

The protein belongs to the methyltransferase superfamily. L-isoaspartyl/D-aspartyl protein methyltransferase family.

It is found in the cytoplasm. It catalyses the reaction [protein]-L-isoaspartate + S-adenosyl-L-methionine = [protein]-L-isoaspartate alpha-methyl ester + S-adenosyl-L-homocysteine. Its function is as follows. Catalyzes the methyl esterification of L-isoaspartyl residues in peptides and proteins that result from spontaneous decomposition of normal L-aspartyl and L-asparaginyl residues. It plays a role in the repair and/or degradation of damaged proteins. This chain is Protein-L-isoaspartate O-methyltransferase, found in Xanthomonas axonopodis pv. citri (strain 306).